A 359-amino-acid polypeptide reads, in one-letter code: MVDILPHPSFLGDMGDHSKKKSGIAMCVGCGSQIHDQYILRVSPDLEWHAACLKCAECSQYLDETCTCFVRDGKTYCKRDYVRLFGIKCAKCNIGFCSSDLVMRARDNVYHMECFRCSVCSRHLLPGDEFSLRDEELLCRADHGLLMERASAGSPISPGNIHSSRPLHIPEPVPVRQPPHRNHVHKQSEKTTRVRTVLNEKQLHTLRTCYNANPRPDALMKEQLVEMTGLSPRVIRVWFQNKRCKDKKKSILMKQLQQQQHNDKTNLQGLTGTPLVAGSPIRHDTTVQGNPVEVQTYQPPWKALSEFALQSDLDQPAFQQLVSFSESGSLGNSSGSDVTSLSSQLPDTPNSMVPSPVET.

LIM zinc-binding domains are found at residues 27–80 (CVGC…CKRD) and 30–143 (CGSQ…RADH). The tract at residues 171 to 190 (EPVPVRQPPHRNHVHKQSEK) is disordered. A DNA-binding region (homeobox) is located at residues 191 to 250 (TTRVRTVLNEKQLHTLRTCYNANPRPDALMKEQLVEMTGLSPRVIRVWFQNKRCKDKKKS). Residues 326–336 (ESGSLGNSSGS) are compositionally biased toward low complexity. The interval 326–359 (ESGSLGNSSGSDVTSLSSQLPDTPNSMVPSPVET) is disordered. Positions 337-359 (DVTSLSSQLPDTPNSMVPSPVET) are enriched in polar residues.

The protein resides in the nucleus. In terms of biological role, binds to one of the cis-acting domain of the insulin gene enhancer. May be involved in subtype specialization of primary motoneurons. This Danio rerio (Zebrafish) protein is Insulin gene enhancer protein isl-2a (isl2a).